Reading from the N-terminus, the 145-residue chain is Globin (145 aa).

S2 is modified (N-acetylserine). Residues 2 to 145 enclose the Globin domain; sequence SLSAAEADLV…IVAALKAAGK (144 aa). H96 lines the heme b pocket.

The protein belongs to the globin family. As to quaternary structure, monomer.

The chain is Globin from Aplysia kurodai (Kuroda's sea hare).